A 95-amino-acid polypeptide reads, in one-letter code: Small ribosomal subunit protein bS6 (95 aa).

The protein belongs to the bacterial ribosomal protein bS6 family.

Functionally, binds together with bS18 to 16S ribosomal RNA. This is Small ribosomal subunit protein bS6 from Acholeplasma laidlawii (strain PG-8A).